The sequence spans 147 residues: Probable disulfide formation protein (147 aa).

Residues 9–28 form a helical membrane-spanning segment; that stretch reads NYSLYFAWLTALIATLGSLY. A disulfide bond links Cys-38 and Cys-41. Transmembrane regions (helical) follow at residues 43-62 and 69-86; these read YQRVCIYPLTILLGIAAYRT and YALPLVVLGFLFSIYQYL. Cys-99 and Cys-106 are oxidised to a cystine. Residues 115–138 traverse the membrane as a helical segment; that stretch reads GFITLPFLGMLATLIMSFFLIMAF.

The protein belongs to the DsbB family. BdbC subfamily.

Its subcellular location is the cell inner membrane. Its function is as follows. Required for disulfide bond formation in some proteins. The protein is Probable disulfide formation protein of Coxiella burnetii (strain CbuK_Q154) (Coxiella burnetii (strain Q154)).